We begin with the raw amino-acid sequence, 210 residues long: High mobility group protein B2 (210 aa).

An N6-acetyllysine modification is found at Lys-3. Residues 9–79 constitute a DNA-binding region (HMG box 1); it reads PRGKMSSYAF…RYDREMKNYV (71 aa). At Cys-23 the chain carries Cysteine sulfonic acid (-SO3H); alternate. Cys-23 and Cys-45 are oxidised to a cystine. Lys-30 bears the N6-acetyllysine mark. Ser-35 carries the phosphoserine modification. At Lys-43 the chain carries N6-acetyllysine. Residue Cys-45 is modified to Cysteine sulfonic acid (-SO3H); alternate. Over residues 51–76 the composition is skewed to basic and acidic residues; that stretch reads TMSAKEKSKFEDLAKSDKARYDREMK. Residues 51-102 form a disordered region; sequence TMSAKEKSKFEDLAKSDKARYDREMKNYVPPKGDKKGKKKDPNAPKRPPSAF. Lys-90 is subject to N6-acetyllysine. A DNA-binding region (HMG box 2) is located at residues 95 to 163; sequence PKRPPSAFFL…KYEKDIAAYR (69 aa). The residue at position 100 (Ser-100) is a Phosphoserine. Cys-106 carries the post-translational modification Cysteine sulfonic acid (-SO3H). 2 positions are modified to N6-acetyllysine: Lys-114 and Lys-141. Residues 162–172 are compositionally biased toward basic and acidic residues; that stretch reads YRAKGKSEVGK. The tract at residues 162–210 is disordered; that stretch reads YRAKGKSEVGKKGPGRPTGSKKKNEPEDEEEEEEEEDDEDEEEEDEDEE. The required for chemotactic activity stretch occupies residues 165 to 180; it reads KGKSEVGKKGPGRPTG. Acidic residues predominate over residues 187–210; sequence PEDEEEEEEEEDDEDEEEEDEDEE.

This sequence belongs to the HMGB family. In terms of assembly, interacts with POU2F2, POU2F1 and POU3F1. Component of the RAG complex composed of core components RAG1 and RAG2, and associated component HMGB1 or HMGB2. Component of the SET complex, composed of at least ANP32A, APEX1, HMGB2, NME1, SET and TREX1. Directly interacts with SET. Interacts with LEF1. In terms of processing, reduction/oxidation of cysteine residues Cys-23, Cys-45 and Cys-106 and a possible intramolecular disulfide bond involving Cys-23 and Cys-45 give rise to different redox forms with specific functional activities in various cellular compartments: 1- fully reduced HMGB2 (HMGB2C23hC45hC106h), 2- disulfide HMGB2 (HMGB2C23-C45C106h) and 3- sulfonyl HMGB2 (HMGB2C23soC45soC106so).

Its subcellular location is the nucleus. It is found in the chromosome. It localises to the cytoplasm. The protein localises to the secreted. Functionally, multifunctional protein with various roles in different cellular compartments. May act in a redox sensitive manner. In the nucleus is an abundant chromatin-associated non-histone protein involved in transcription, chromatin remodeling and V(D)J recombination and probably other processes. Binds DNA with a preference to non-canonical DNA structures such as single-stranded DNA. Can bent DNA and enhance DNA flexibility by looping thus providing a mechanism to promote activities on various gene promoters by enhancing transcription factor binding and/or bringing distant regulatory sequences into close proximity. Involved in V(D)J recombination by acting as a cofactor of the RAG complex: acts by stimulating cleavage and RAG protein binding at the 23 bp spacer of conserved recombination signal sequences (RSS). Proposed to be involved in the innate immune response to nucleic acids by acting as a cytoplasmic promiscuous immunogenic DNA/RNA sensor which cooperates with subsequent discriminative sensing by specific pattern recognition receptors. In the extracellular compartment acts as a chemokine. Promotes proliferation and migration of endothelial cells implicating AGER/RAGE. Has antimicrobial activity in gastrointestinal epithelial tissues. Involved in inflammatory response to antigenic stimulus coupled with pro-inflammatory activity. May play a role in germ cell differentiation. Involved in modulation of neurogenesis probably by regulation of neural stem proliferation. Involved in articular cartilage surface maintenance implicating LEF1 and the Wnt/beta-catenin pathway. The protein is High mobility group protein B2 (Hmgb2) of Rattus norvegicus (Rat).